A 202-amino-acid polypeptide reads, in one-letter code: NADH-quinone oxidoreductase subunit C (202 aa).

Belongs to the complex I 30 kDa subunit family. In terms of assembly, NDH-1 is composed of 14 different subunits. Subunits NuoB, C, D, E, F, and G constitute the peripheral sector of the complex.

It is found in the cell inner membrane. The catalysed reaction is a quinone + NADH + 5 H(+)(in) = a quinol + NAD(+) + 4 H(+)(out). Functionally, NDH-1 shuttles electrons from NADH, via FMN and iron-sulfur (Fe-S) centers, to quinones in the respiratory chain. The immediate electron acceptor for the enzyme in this species is believed to be ubiquinone. Couples the redox reaction to proton translocation (for every two electrons transferred, four hydrogen ions are translocated across the cytoplasmic membrane), and thus conserves the redox energy in a proton gradient. This chain is NADH-quinone oxidoreductase subunit C, found in Brucella abortus (strain 2308).